The sequence spans 522 residues: Zinc finger protein 892 (522 aa).

Disordered stretches follow at residues 1–22 (MEPEGRGSLFEDSDLLHAGNPK) and 96–124 (AASQKHWETIPESKELTPEKDISEEESAP). Basic and acidic residues predominate over residues 100–116 (KHWETIPESKELTPEKD). C2H2-type zinc fingers lie at residues 221-243 (WKCNECEKAFSYYSAFVLHQRIH), 249-271 (YECNECGKAFSQSIHLTLHQRIH), 277-299 (YECHECGKAFSHRSALIRHHIIH), 305-327 (YECNECGKAFNQSSYLTQHQRIH), 333-355 (YECNECGKAFSQSTFLTQHQVIH), 361-383 (YKCNECGKAFSDRSGLIQHQRTH), 389-411 (YECNECGKAFGYCSALTQHQRTH), 417-439 (YKCNDCAKAFSDRSALIRHQRTH), 445-467 (YKCKDCGKAFSQSSSLTKHQKTH), and 473-495 (YKCKECGKAFSQSSSLSQHQKTH).

The protein belongs to the krueppel C2H2-type zinc-finger protein family.

It is found in the nucleus. Functionally, may be involved in transcriptional regulation. The polypeptide is Zinc finger protein 892 (Homo sapiens (Human)).